The sequence spans 74 residues: U3-agatoxin-Ao1d (74 aa).

A signal peptide spans 1–20; that stretch reads MKAAISLLLLSALLFVVIEA. Positions 21–34 are excised as a propeptide; sequence ITYEEGKELFQGER. 4 disulfide bridges follow: C37–C53, C44–C58, C52–C68, and C60–C66. The residue at position 72 (S72) is a Serine amide.

This sequence belongs to the neurotoxin 07 (Beta/delta-agtx) family. 02 (aga-3) subfamily. In terms of tissue distribution, expressed by the venom gland.

The protein resides in the secreted. Functionally, insecticidal neurotoxin that induces an irreversible spastic paralysis when injected into insects. Modifies presynaptic voltage-gated sodium channels (Nav), causing them to open at the normal resting potential of the nerve. This leads to spontaneous release of neurotransmitter and repetitive action potentials in motor neurons. This chain is U3-agatoxin-Ao1d, found in Agelena orientalis (Funnel-web spider).